The chain runs to 92 residues: Calitoxin (92 aa).

The N-terminal stretch at 1-20 is a signal peptide; that stretch reads MKTQVLVVLVLCVVFCLAES. Residues 21 to 42 constitute a propeptide that is removed on maturation; the sequence is RNSMTSEERGLVSLMRQRDDIA. Disulfide bonds link C47–C86, C49–C77, and C67–C87.

The protein belongs to the sea anemone sodium channel inhibitory toxin family. In terms of tissue distribution, expressed both outside and in acontia, a specialised envenomation structure laden with batteries of venom-containing nematocysts found only in the superfamily Metridioidea.

Its subcellular location is the secreted. It is found in the nematocyst. Functionally, in neuromuscular preparation of crustaceans, the toxin increased neurotransmitter release, causing repetitive firing of the axons. May affect sodium channels (Nav). The protein is Calitoxin of Calliactis polypus (Hermit crab anemone).